The sequence spans 452 residues: tRNA modification GTPase MnmE (452 aa).

(6S)-5-formyl-5,6,7,8-tetrahydrofolate contacts are provided by arginine 23, glutamate 81, and lysine 120. Positions 217-373 (GIKTAIIGQT…LVLRINQMYL (157 aa)) constitute a TrmE-type G domain. A K(+)-binding site is contributed by asparagine 227. GTP contacts are provided by residues 227–232 (NVGKSS), 246–252 (TDIPGTT), and 271–274 (DTAG). Position 231 (serine 231) interacts with Mg(2+). 3 residues coordinate K(+): threonine 246, isoleucine 248, and threonine 251. Threonine 252 contributes to the Mg(2+) binding site. A (6S)-5-formyl-5,6,7,8-tetrahydrofolate-binding site is contributed by lysine 452.

This sequence belongs to the TRAFAC class TrmE-Era-EngA-EngB-Septin-like GTPase superfamily. TrmE GTPase family. Homodimer. Heterotetramer of two MnmE and two MnmG subunits. K(+) serves as cofactor.

The protein resides in the cytoplasm. Functionally, exhibits a very high intrinsic GTPase hydrolysis rate. Involved in the addition of a carboxymethylaminomethyl (cmnm) group at the wobble position (U34) of certain tRNAs, forming tRNA-cmnm(5)s(2)U34. This Mycoplasma mycoides subsp. mycoides SC (strain CCUG 32753 / NCTC 10114 / PG1) protein is tRNA modification GTPase MnmE.